The sequence spans 196 residues: Pyridoxal 5'-phosphate synthase subunit PdxT (196 aa).

47–49 lines the L-glutamine pocket; sequence GES. C79 (nucleophile) is an active-site residue. L-glutamine is bound by residues R106 and 134 to 135; that span reads IR. Active-site charge relay system residues include H170 and E172.

Belongs to the glutaminase PdxT/SNO family. In terms of assembly, in the presence of PdxS, forms a dodecamer of heterodimers. Only shows activity in the heterodimer.

The enzyme catalyses aldehydo-D-ribose 5-phosphate + D-glyceraldehyde 3-phosphate + L-glutamine = pyridoxal 5'-phosphate + L-glutamate + phosphate + 3 H2O + H(+). It carries out the reaction L-glutamine + H2O = L-glutamate + NH4(+). The protein operates within cofactor biosynthesis; pyridoxal 5'-phosphate biosynthesis. In terms of biological role, catalyzes the hydrolysis of glutamine to glutamate and ammonia as part of the biosynthesis of pyridoxal 5'-phosphate. The resulting ammonia molecule is channeled to the active site of PdxS. The polypeptide is Pyridoxal 5'-phosphate synthase subunit PdxT (Bacillus thuringiensis subsp. konkukian (strain 97-27)).